The primary structure comprises 290 residues: Zinc-finger homeodomain protein 2 (290 aa).

The segment covering 1 to 15 (MDFDDHDEGDGDEEM) has biased composition (acidic residues). Positions 1–59 (MDFDDHDEGDGDEEMPPMPLSSGYDAPMQPGLGGGGGGVPKPGGGVGGGGGGGGGGGGG) are disordered. The span at 31-59 (GLGGGGGGVPKPGGGVGGGGGGGGGGGGG) shows a compositional bias: gly residues. The segment at 63 to 112 (YRECLKNHAVGIGGHAVDGCGEFMASGEEGSIDALRCAACGCHRNFHRKE) adopts a ZF-HD dimerization-type; degenerate zinc-finger fold. Positions 226–289 (KKRFRTKFTQ…NNKHTLGKKA (64 aa)) form a DNA-binding region, homeobox.

As to quaternary structure, homo- and heterodimer with other ZFHD proteins.

The protein resides in the nucleus. Putative transcription factor. This is Zinc-finger homeodomain protein 2 (ZHD2) from Oryza sativa subsp. japonica (Rice).